We begin with the raw amino-acid sequence, 72 residues long: Translation initiation factor IF-1 (72 aa).

In terms of domain architecture, S1-like spans 1-72 (MAKEGAIEVE…TRGRIVYRYK (72 aa)).

This sequence belongs to the IF-1 family. Component of the 30S ribosomal translation pre-initiation complex which assembles on the 30S ribosome in the order IF-2 and IF-3, IF-1 and N-formylmethionyl-tRNA(fMet); mRNA recruitment can occur at any time during PIC assembly.

It localises to the cytoplasm. One of the essential components for the initiation of protein synthesis. Stabilizes the binding of IF-2 and IF-3 on the 30S subunit to which N-formylmethionyl-tRNA(fMet) subsequently binds. Helps modulate mRNA selection, yielding the 30S pre-initiation complex (PIC). Upon addition of the 50S ribosomal subunit IF-1, IF-2 and IF-3 are released leaving the mature 70S translation initiation complex. The polypeptide is Translation initiation factor IF-1 (Corynebacterium diphtheriae (strain ATCC 700971 / NCTC 13129 / Biotype gravis)).